We begin with the raw amino-acid sequence, 453 residues long: Acyl-coenzyme A thioesterase 2, mitochondrial (453 aa).

The transit peptide at 1–42 (MVASSFAVLRASRLCQQDWKSWARLFVPPPLSTGGRTTWART) directs the protein to the mitochondrion. Lys83 bears the N6-acetyllysine mark. Residues Ser273, Asp365, and His399 each act as charge relay system in the active site. Lys447 bears the N6-succinyllysine mark.

Belongs to the C/M/P thioester hydrolase family. As to quaternary structure, monomer. As to expression, highly expressed in brown and white adipose tissue, muscle, heart, kidney, lung, adrenal gland and spleen; weakly expressed in intestine, testis and brain.

It localises to the mitochondrion matrix. The catalysed reaction is hexadecanoyl-CoA + H2O = hexadecanoate + CoA + H(+). It carries out the reaction tetradecanoyl-CoA + H2O = tetradecanoate + CoA + H(+). The enzyme catalyses octadecanoyl-CoA + H2O = octadecanoate + CoA + H(+). It catalyses the reaction eicosanoyl-CoA + H2O = eicosanoate + CoA + H(+). The catalysed reaction is decanoyl-CoA + H2O = decanoate + CoA + H(+). It carries out the reaction dodecanoyl-CoA + H2O = dodecanoate + CoA + H(+). The enzyme catalyses (9Z)-octadecenoyl-CoA + H2O = (9Z)-octadecenoate + CoA + H(+). It catalyses the reaction (9Z)-hexadecenoyl-CoA + H2O = (9Z)-hexadecenoate + CoA + H(+). The catalysed reaction is (9E)-octadecenoyl-CoA + H2O = (9E)-octadecenoate + CoA + H(+). It carries out the reaction (9Z,12Z)-octadecadienoyl-CoA + H2O = (9Z,12Z)-octadecadienoate + CoA + H(+). Its pathway is lipid metabolism; fatty acid metabolism. Functionally, catalyzes the hydrolysis of acyl-CoAs into free fatty acids and coenzyme A (CoASH), regulating their respective intracellular levels. Displays higher activity toward long chain acyl CoAs (C14-C20). The enzyme is involved in enhancing the hepatic fatty acid oxidation in mitochondria. This is Acyl-coenzyme A thioesterase 2, mitochondrial (Acot2) from Mus musculus (Mouse).